Reading from the N-terminus, the 338-residue chain is MTRF1L release factor glutamine methyltransferase (338 aa).

S-adenosyl-L-methionine-binding positions include 167 to 171, Asp-190, Trp-225, and Asn-239; that span reads GCGSG. 239-242 contributes to the substrate binding site; it reads NPPY.

It belongs to the protein N5-glutamine methyltransferase family.

The protein localises to the mitochondrion. The catalysed reaction is L-glutaminyl-[peptide chain release factor] + S-adenosyl-L-methionine = N(5)-methyl-L-glutaminyl-[peptide chain release factor] + S-adenosyl-L-homocysteine + H(+). N5-glutamine methyltransferase responsible for the methylation of the glutamine residue in the universally conserved GGQ motif of the mitochondrial translation release factors MTRF1, MTRF1L, MRPL58/ICT1 and MTRFR. The protein is MTRF1L release factor glutamine methyltransferase (HEMK1) of Homo sapiens (Human).